A 58-amino-acid chain; its full sequence is Sodium/potassium-transporting ATPase subunit gamma (58 aa).

Residues 20-39 traverse the membrane as a helical segment; that stretch reads NGGLIFAALAFIVGLVIILS.

The protein belongs to the FXYD family. As to quaternary structure, regulatory subunit of the sodium/potassium-transporting ATPase which is composed of a catalytic alpha subunit, an auxiliary non-catalytic beta subunit and an additional regulatory subunit. As to expression, highest levels expressed in the kidney and spleen. Restricted to the basolateral membrane in renal epithelial cells and varies in its level of expression along the nephron.

It is found in the membrane. Functionally, may be involved in forming the receptor site for cardiac glycoside binding or may modulate the transport function of the sodium ATPase. The chain is Sodium/potassium-transporting ATPase subunit gamma (FXYD2) from Bos taurus (Bovine).